Reading from the N-terminus, the 83-residue chain is Kappa-theraphotoxin-Cg2b (83 aa).

An N-terminal signal peptide occupies residues 1–21; that stretch reads MKGSAFAIILGLVVLCACSFA. Positions 22–53 are excised as a propeptide; that stretch reads EDEQDQFASPNELLRSMFLESRHELIPEVEGR. 3 cysteine pairs are disulfide-bonded: Cys55/Cys69, Cys62/Cys74, and Cys68/Cys78.

Belongs to the neurotoxin 30 (phrixotoxin) family. As to expression, expressed by the venom gland.

It localises to the secreted. Its function is as follows. Probable ion channel inhibitor. This chain is Kappa-theraphotoxin-Cg2b, found in Chilobrachys guangxiensis (Chinese earth tiger tarantula).